A 337-amino-acid polypeptide reads, in one-letter code: Anthranilate phosphoribosyltransferase (337 aa).

Residues Gly-80, 83-84 (GD), Thr-88, 90-93 (NIST), 108-116 (KHGNRSVSS), and Ser-120 contribute to the 5-phospho-alpha-D-ribose 1-diphosphate site. Gly-80 is an anthranilate binding site. Ser-92 contributes to the Mg(2+) binding site. Asn-111 is a binding site for anthranilate. Residue Arg-166 coordinates anthranilate. The Mg(2+) site is built by Asp-225 and Glu-226.

This sequence belongs to the anthranilate phosphoribosyltransferase family. As to quaternary structure, homodimer. Requires Mg(2+) as cofactor.

It carries out the reaction N-(5-phospho-beta-D-ribosyl)anthranilate + diphosphate = 5-phospho-alpha-D-ribose 1-diphosphate + anthranilate. It participates in amino-acid biosynthesis; L-tryptophan biosynthesis; L-tryptophan from chorismate: step 2/5. In terms of biological role, catalyzes the transfer of the phosphoribosyl group of 5-phosphorylribose-1-pyrophosphate (PRPP) to anthranilate to yield N-(5'-phosphoribosyl)-anthranilate (PRA). This chain is Anthranilate phosphoribosyltransferase, found in Syntrophobacter fumaroxidans (strain DSM 10017 / MPOB).